The primary structure comprises 398 residues: tRNA(Ile)-lysidine synthase (398 aa).

25–30 provides a ligand contact to ATP; the sequence is SGGVDS.

This sequence belongs to the tRNA(Ile)-lysidine synthase family.

It localises to the cytoplasm. It catalyses the reaction cytidine(34) in tRNA(Ile2) + L-lysine + ATP = lysidine(34) in tRNA(Ile2) + AMP + diphosphate + H(+). Functionally, ligates lysine onto the cytidine present at position 34 of the AUA codon-specific tRNA(Ile) that contains the anticodon CAU, in an ATP-dependent manner. Cytidine is converted to lysidine, thus changing the amino acid specificity of the tRNA from methionine to isoleucine. This Francisella tularensis subsp. novicida (strain U112) protein is tRNA(Ile)-lysidine synthase.